A 396-amino-acid chain; its full sequence is DNA polymerase IV (396 aa).

The UmuC domain occupies isoleucine 6–glycine 186. The Mg(2+) site is built by aspartate 10 and aspartate 104. Glutamate 105 is a catalytic residue.

Belongs to the DNA polymerase type-Y family. Monomer. Requires Mg(2+) as cofactor.

The protein localises to the cytoplasm. The catalysed reaction is DNA(n) + a 2'-deoxyribonucleoside 5'-triphosphate = DNA(n+1) + diphosphate. Its function is as follows. Poorly processive, error-prone DNA polymerase involved in untargeted mutagenesis. Copies undamaged DNA at stalled replication forks, which arise in vivo from mismatched or misaligned primer ends. These misaligned primers can be extended by PolIV. Exhibits no 3'-5' exonuclease (proofreading) activity. May be involved in translesional synthesis, in conjunction with the beta clamp from PolIII. This chain is DNA polymerase IV, found in Desulfatibacillum aliphaticivorans.